The following is a 1705-amino-acid chain: Protein TIC 214 (1705 aa).

5 consecutive transmembrane segments (helical) span residues 18-38 (IINSVVVVGLYYGFLTTFSIG), 67-87 (FITGQLIMFISIYYAPLHLAL), 127-147 (LSIQCVFLNNLIFQLLNHFIL), 175-195 (VGWIIGHILFMKWVGLLLVWI), and 218-238 (SMSMAGIFSIFLLVTCVHYLG).

It belongs to the TIC214 family. In terms of assembly, part of the Tic complex.

Its subcellular location is the plastid. It is found in the chloroplast inner membrane. In terms of biological role, involved in protein precursor import into chloroplasts. May be part of an intermediate translocation complex acting as a protein-conducting channel at the inner envelope. This chain is Protein TIC 214, found in Helianthus annuus (Common sunflower).